Here is a 144-residue protein sequence, read N- to C-terminus: Granulocyte-macrophage colony-stimulating factor (144 aa).

Residues 1-17 (MWLQSLLLLGTVACSIS) form the signal peptide. O-linked (GalNAc...) serine glycans are attached at residues S22, S24, and S26. O-linked (GalNAc...) threonine; partial glycosylation is present at T27. N-linked (GlcNAc...) asparagine glycosylation is found at N44 and N54. 2 disulfide bridges follow: C71/C113 and C105/C138.

This sequence belongs to the GM-CSF family. As to quaternary structure, monomer. The signaling GM-CSF receptor complex is a dodecamer of two head-to-head hexamers of two alpha, two beta, and two ligand subunits.

Its subcellular location is the secreted. Its function is as follows. Cytokine that stimulates the growth and differentiation of hematopoietic precursor cells from various lineages, including granulocytes, macrophages, eosinophils and erythrocytes. The chain is Granulocyte-macrophage colony-stimulating factor (CSF2) from Homo sapiens (Human).